The following is a 660-amino-acid chain: Solute carrier family 5 member 4 (660 aa).

The Cytoplasmic portion of the chain corresponds to 1–28 (MASTLSPSTVTKTPGPPEISERIQNAAD). Residues 29–47 (ISVIVIYFVVVMAVGLWAM) traverse the membrane as a helical segment. Residues 48 to 64 (LRTNRGTVGGFFLAGRD) are Extracellular-facing. The helical transmembrane segment at 65 to 85 (VTWWPMGASLFASNIGSGHFV) threads the bilayer. Residues 86-105 (GLAGTGAASGIAIAAFEWNA) lie on the Cytoplasmic side of the membrane. The helical transmembrane segment at 106–126 (LLLLLVLGWFFVPIYIKAGVM) threads the bilayer. The Extracellular segment spans residues 127–171 (TMPEYLRKRFGGKRLQIYLSILSLFICVALRISSDIFSGAIFIKL). Residues 172 to 191 (ALGLDLYLAIFSLLAITAIY) form a helical membrane-spanning segment. Topologically, residues 192–208 (TITGGLASVIYTDTLQT) are cytoplasmic. Residues 209–229 (IIMLIGSFILMGFAFVEVGGY) form a helical membrane-spanning segment. At 230–270 (ESFTEKYMNAIPTIVEGDNLTISPKCYTPQGDSFHIFRDAV) the chain is on the extracellular side. The N-linked (GlcNAc...) asparagine glycan is linked to N248. The helical transmembrane segment at 271–291 (TGDIPWPGMIFGMTVVAAWYW) threads the bilayer. Topologically, residues 292 to 314 (CTDQVIVQRCLSGKDMSHVKAAC) are cytoplasmic. The chain crosses the membrane as a helical span at residues 315-334 (IMCGYLKLLPMFLMVMPGMI). The Extracellular segment spans residues 335–423 (SRILYTEKVA…RKQASEKELL (89 aa)). Residues 424 to 443 (IAGRLFIILLIVISIVWVPL) form a helical membrane-spanning segment. At 444–455 (VQVAQNGQLFHY) the chain is on the cytoplasmic side. The chain crosses the membrane as a helical span at residues 456-476 (IESISSYLGPPIAAVFLLAIF). The Extracellular portion of the chain corresponds to 477-526 (CKRVNEQGAFWGLIIGFVMGLIRMIAEFVYGTGSCLAASNCPQIICGVHY). A helical transmembrane segment spans residues 527–547 (LYFALILFFVSILVVLAISLL). Topologically, residues 548-638 (TKPIPDVHLY…TDTSEKPLWK (91 aa)) are cytoplasmic. A helical transmembrane segment spans residues 639-659 (TIVNINAILLLAVAVFVHGYF).

This sequence belongs to the sodium:solute symporter (SSF) (TC 2.A.21) family. As to expression, kidney, intestine, liver, skeletal muscle and spleen.

It is found in the cell membrane. It catalyses the reaction D-glucose(out) + 2 Na(+)(out) = D-glucose(in) + 2 Na(+)(in). Its activity is regulated as follows. Inhibited by phlorizin. Functionally, low-affinity sodium/D-glucose symporter with a great selectivity for sugars (D-glucose &gt;&gt; D-galactose). Na(+) and D-glucose transport are tightly coupled at neutral pH, but at acidic pH, ion transport is uncoupled from sugar transport. This is Solute carrier family 5 member 4 from Sus scrofa (Pig).